A 120-amino-acid polypeptide reads, in one-letter code: Kidney androgen-regulated protein (120 aa).

The N-terminal stretch at 1–18 (MMICKVLVITVFCVLTVA) is a signal peptide.

It is found in the secreted. In Rattus norvegicus (Rat), this protein is Kidney androgen-regulated protein (Kap).